A 916-amino-acid chain; its full sequence is Translation initiation factor IF-2 (916 aa).

The span at 151–191 shows a compositional bias: basic and acidic residues; it reads NLDEQQRLAESDRARDEAIQRKRDEEQAAKDRVEAERKAAE. 2 disordered regions span residues 151 to 262 and 280 to 328; these read NLDE…SHVM and HLSA…ERPT. 2 stretches are compositionally biased toward low complexity: residues 192–243 and 293–305; these read EAAA…ATPA and RGKP…SSSS. The 170-residue stretch at 415-584 folds into the tr-type G domain; that stretch reads SRPPVVTIMG…SLQAEVLELK (170 aa). The segment at 424 to 431 is G1; the sequence is GHVDHGKT. A GTP-binding site is contributed by 424-431; the sequence is GHVDHGKT. The segment at 449-453 is G2; it reads GITQH. A G3 region spans residues 470 to 473; the sequence is DTPG. GTP-binding positions include 470-474 and 524-527; these read DTPGH and NKID. The interval 524–527 is G4; the sequence is NKID. The segment at 560–562 is G5; that stretch reads SAK.

This sequence belongs to the TRAFAC class translation factor GTPase superfamily. Classic translation factor GTPase family. IF-2 subfamily.

Its subcellular location is the cytoplasm. In terms of biological role, one of the essential components for the initiation of protein synthesis. Protects formylmethionyl-tRNA from spontaneous hydrolysis and promotes its binding to the 30S ribosomal subunits. Also involved in the hydrolysis of GTP during the formation of the 70S ribosomal complex. The sequence is that of Translation initiation factor IF-2 from Xanthomonas campestris pv. campestris (strain ATCC 33913 / DSM 3586 / NCPPB 528 / LMG 568 / P 25).